The sequence spans 192 residues: Xanthine phosphoribosyltransferase (192 aa).

Residues Leu20 and Asn27 each contribute to the xanthine site. 128 to 132 (ANGDA) serves as a coordination point for 5-phospho-alpha-D-ribose 1-diphosphate. Lys156 contacts xanthine.

It belongs to the purine/pyrimidine phosphoribosyltransferase family. Xpt subfamily. In terms of assembly, homodimer.

The protein localises to the cytoplasm. The enzyme catalyses XMP + diphosphate = xanthine + 5-phospho-alpha-D-ribose 1-diphosphate. It participates in purine metabolism; XMP biosynthesis via salvage pathway; XMP from xanthine: step 1/1. Its function is as follows. Converts the preformed base xanthine, a product of nucleic acid breakdown, to xanthosine 5'-monophosphate (XMP), so it can be reused for RNA or DNA synthesis. The sequence is that of Xanthine phosphoribosyltransferase from Staphylococcus aureus (strain JH1).